A 401-amino-acid polypeptide reads, in one-letter code: Enoyl-[acyl-carrier-protein] reductase [NADH] (401 aa).

Residues 48 to 53 (GSSSGY), 74 to 75 (FE), 111 to 112 (DA), and 139 to 140 (LA) contribute to the NAD(+) site. A substrate-binding site is contributed by tyrosine 225. The active-site Proton donor is tyrosine 235. NAD(+) is bound by residues lysine 244 and 273 to 275 (VVT).

The protein belongs to the TER reductase family. As to quaternary structure, monomer.

It carries out the reaction a 2,3-saturated acyl-[ACP] + NAD(+) = a (2E)-enoyl-[ACP] + NADH + H(+). It participates in lipid metabolism; fatty acid biosynthesis. Its function is as follows. Involved in the final reduction of the elongation cycle of fatty acid synthesis (FAS II). Catalyzes the reduction of a carbon-carbon double bond in an enoyl moiety that is covalently linked to an acyl carrier protein (ACP). In Shewanella putrefaciens (strain CN-32 / ATCC BAA-453), this protein is Enoyl-[acyl-carrier-protein] reductase [NADH].